The following is a 137-amino-acid chain: Nuclear transition protein 2 (137 aa).

The span at methionine 1–proline 21 shows a compositional bias: polar residues. The tract at residues methionine 1–asparagine 137 is disordered. Histidine 12, histidine 16, histidine 24, cysteine 29, cysteine 31, cysteine 35, and cysteine 38 together coordinate Zn(2+). The segment covering glutamine 22–proline 74 has biased composition (low complexity). A compositionally biased stretch (basic residues) spans proline 78 to proline 91. Positions glycine 110 to isoleucine 118 match the Nuclear localization signal motif. Residues lysine 126–asparagine 137 are compositionally biased toward basic residues. Phosphoserine is present on serine 132.

The protein belongs to the nuclear transition protein 2 family. Testis. Expression is restricted to haploid germ cells.

It is found in the nucleus. The protein localises to the nucleolus. Its subcellular location is the chromosome. Functionally, plays a key role in the replacement of histones to protamine in the elongating spermatids of mammals. In condensing spermatids, loaded onto the nucleosomes, where it promotes the recruitment and processing of protamines, which are responsible for histone eviction. This is Nuclear transition protein 2 (TNP2) from Sus scrofa (Pig).